Here is a 444-residue protein sequence, read N- to C-terminus: Putative methylesterase 13, chloroplastic (444 aa).

Disordered regions lie at residues 1 to 32 (MGNSFTCISHEQEQRPKKSSGGGGNNSGKYKY), 49 to 90 (PSLS…KDSH), and 124 to 176 (SVVY…QLVD). A chloroplast-targeting transit peptide spans 1-60 (MGNSFTCISHEQEQRPKKSSGGGGNNSGKYKYVRRLSLMPSFRRRTLLPSLSCSGSSSTS). Positions 49–64 (PSLSCSGSSSTSSSKK) are enriched in low complexity. Over residues 65–82 (GGIKAKTKKIRERHHHHH) the composition is skewed to basic residues. The span at 124-148 (SVVYPSAQPSGTSSGPVSAVQTPKK) shows a compositional bias: polar residues. The segment covering 149–164 (SSAGFVRSSSSRQRSS) has biased composition (low complexity). The AB hydrolase-1 domain maps to 190 to 310 (FVLVHGGGFG…LFNQQLGSND (121 aa)). D264 serves as the catalytic Acyl-ester intermediate. Catalysis depends on charge relay system residues D390 and H418.

This sequence belongs to the AB hydrolase superfamily. Methylesterase family.

The protein resides in the plastid. The protein localises to the chloroplast. Its function is as follows. Putative methylesterase. In Arabidopsis thaliana (Mouse-ear cress), this protein is Putative methylesterase 13, chloroplastic.